A 218-amino-acid polypeptide reads, in one-letter code: Putative inactive cathepsin L-like protein CTSL3P (218 aa).

Disordered stretches follow at residues 144-173 (GDWK…EVAQ) and 195-218 (GDED…EAQV). A compositionally biased stretch (basic and acidic residues) spans 201-212 (EDKWPHDMRNHL).

The protein belongs to the peptidase C1 family.

In Homo sapiens (Human), this protein is Putative inactive cathepsin L-like protein CTSL3P (CTSL3P).